Here is a 189-residue protein sequence, read N- to C-terminus: uncharacterized protein (189 aa).

Helical transmembrane passes span 4 to 21, 34 to 56, 79 to 101, 122 to 144, and 148 to 170; these read AIST…FLFR, AFYP…PLIL, LLVI…LIYS, RILS…VLLN, and ILHV…NLLV.

It is found in the cell membrane. This is an uncharacterized protein from Archaeoglobus fulgidus (strain ATCC 49558 / DSM 4304 / JCM 9628 / NBRC 100126 / VC-16).